A 154-amino-acid chain; its full sequence is Superoxide dismutase [Cu-Zn] (154 aa).

Cu cation is bound by residues His-45, His-47, and His-62. Cysteines 56 and 146 form a disulfide. Zn(2+) is bound by residues His-62, His-70, His-79, and Asp-82. Position 120 (His-120) interacts with Cu cation.

The protein belongs to the Cu-Zn superoxide dismutase family. In terms of assembly, homodimer. It depends on Cu cation as a cofactor. Requires Zn(2+) as cofactor.

The protein resides in the cytoplasm. The catalysed reaction is 2 superoxide + 2 H(+) = H2O2 + O2. In terms of biological role, destroys radicals which are normally produced within the cells and which are toxic to biological systems. This Bombyx mori (Silk moth) protein is Superoxide dismutase [Cu-Zn].